A 347-amino-acid polypeptide reads, in one-letter code: Glutamyl-Q tRNA(Asp) synthetase (347 aa).

L-glutamate contacts are provided by residues 31–35 (RFAPS) and E67. The 'HIGH' region signature appears at 34–44 (PSPTSALHLGN). Zn(2+) is bound by residues C121, C123, Y143, and C147. Y203 and R221 together coordinate L-glutamate. The 'KMSKS' region signature appears at 259-263 (RLSKS). Residue K262 participates in ATP binding.

Belongs to the class-I aminoacyl-tRNA synthetase family. GluQ subfamily. Zn(2+) is required as a cofactor.

In terms of biological role, catalyzes the tRNA-independent activation of glutamate in presence of ATP and the subsequent transfer of glutamate onto a tRNA(Asp). Glutamate is transferred on the 2-amino-5-(4,5-dihydroxy-2-cyclopenten-1-yl) moiety of the queuosine in the wobble position of the QUC anticodon. The chain is Glutamyl-Q tRNA(Asp) synthetase from Cutibacterium acnes (strain DSM 16379 / KPA171202) (Propionibacterium acnes).